Consider the following 360-residue polypeptide: MSTTTNKKPIRVYVDGCFDLMHFGHANALRQARELGDILVVGVHTDEEIAKNKGPPVMNEQERYKAVRACKWADEVAEGAPYTLTEEYLDSLNCDFCVHGEDISVGADGKDVYEGIKKSGKFRFIKRTEGVSTTELVGRMLLCTKDHLQNVSGEQTSPLGGVNPNVLHKQSPYTSLSHFLPTTRKIVQFSEGRSPKPNDKIIYMDGGFDLFHVGHTEALKQARALGDYLIVGVHDDRVVHEQKGSNFPIMNLHERVLSVLSCRYVDEVVIGAPFSVTKDMIDSLHINVVVHGDDQVVLGPEGGVDPYKLPRELGIYKEVKHTEGLTATEIVKRIIDNRLQYEARNRKKEAKEINFIEQSN.

CTP contacts are provided by residues 207–208 (GF), 215–218 (HTEA), Lys243, 291–294 (HGDD), and 321–325 (HTEGL).

Belongs to the cytidylyltransferase family.

It catalyses the reaction phosphoethanolamine + CTP + H(+) = CDP-ethanolamine + diphosphate. It participates in phospholipid metabolism; phosphatidylethanolamine biosynthesis; phosphatidylethanolamine from ethanolamine: step 2/3. Ethanolamine-phosphate cytidylyltransferase that catalyzes the second step in the synthesis of phosphatidylethanolamine (PE) from ethanolamine via the CDP-ethanolamine pathway. The chain is Ethanolamine-phosphate cytidylyltransferase (pctA) from Dictyostelium discoideum (Social amoeba).